The chain runs to 485 residues: Cobyric acid synthase (485 aa).

The GATase cobBQ-type domain occupies 249–437; that stretch reads HLKIRVPVWQ…WHGLFSQPSA (189 aa). The Nucleophile role is filled by Cys330. His429 is a catalytic residue.

This sequence belongs to the CobB/CobQ family. CobQ subfamily.

Its pathway is cofactor biosynthesis; adenosylcobalamin biosynthesis. In terms of biological role, catalyzes amidations at positions B, D, E, and G on adenosylcobyrinic A,C-diamide. NH(2) groups are provided by glutamine, and one molecule of ATP is hydrogenolyzed for each amidation. The sequence is that of Cobyric acid synthase from Saccharophagus degradans (strain 2-40 / ATCC 43961 / DSM 17024).